Consider the following 189-residue polypeptide: Probable nicotinate-nucleotide adenylyltransferase (189 aa).

This sequence belongs to the NadD family.

The enzyme catalyses nicotinate beta-D-ribonucleotide + ATP + H(+) = deamido-NAD(+) + diphosphate. It participates in cofactor biosynthesis; NAD(+) biosynthesis; deamido-NAD(+) from nicotinate D-ribonucleotide: step 1/1. In terms of biological role, catalyzes the reversible adenylation of nicotinate mononucleotide (NaMN) to nicotinic acid adenine dinucleotide (NaAD). This chain is Probable nicotinate-nucleotide adenylyltransferase, found in Bacillus cereus (strain G9842).